Reading from the N-terminus, the 943-residue chain is Translation initiation factor IF-2 (943 aa).

The segment at Met-35–Pro-359 is disordered. A compositionally biased stretch (low complexity) spans Lys-57–Ala-76. Basic and acidic residues-rich tracts occupy residues Ser-92–Gln-103 and Ala-110–Asp-124. The span at Ser-130–Gln-141 shows a compositional bias: polar residues. The span at Thr-142–Arg-190 shows a compositional bias: low complexity. 3 stretches are compositionally biased toward basic and acidic residues: residues Ser-191–Asn-205, Ala-239–Ala-250, and Lys-259–Thr-271. 2 stretches are compositionally biased toward low complexity: residues Pro-289–Ala-299 and Asn-315–Arg-330. Positions Asn-331–Gln-342 are enriched in basic residues. Residues Pro-346 to Leu-358 show a composition bias toward basic and acidic residues. Residues Pro-444–Lys-613 form the tr-type G domain. Positions Gly-453–Thr-460 are G1. Gly-453 to Thr-460 provides a ligand contact to GTP. Residues Gly-478–His-482 form a G2 region. Residues Asp-499–Gly-502 are G3. Residues Asp-499 to His-503 and Asn-553 to Asp-556 each bind GTP. Residues Asn-553–Asp-556 form a G4 region. The segment at Ser-589–Lys-591 is G5.

The protein belongs to the TRAFAC class translation factor GTPase superfamily. Classic translation factor GTPase family. IF-2 subfamily.

The protein localises to the cytoplasm. Its function is as follows. One of the essential components for the initiation of protein synthesis. Protects formylmethionyl-tRNA from spontaneous hydrolysis and promotes its binding to the 30S ribosomal subunits. Also involved in the hydrolysis of GTP during the formation of the 70S ribosomal complex. The polypeptide is Translation initiation factor IF-2 (Lacticaseibacillus paracasei (strain ATCC 334 / BCRC 17002 / CCUG 31169 / CIP 107868 / KCTC 3260 / NRRL B-441) (Lactobacillus paracasei)).